A 152-amino-acid chain; its full sequence is Superoxide dismutase [Cu-Zn] (152 aa).

Cu cation is bound by residues His45, His47, and His62. A disulfide bridge links Cys56 with Cys145. Residues His62, His70, His79, and Asp82 each coordinate Zn(2+). Residue His119 participates in Cu cation binding.

It belongs to the Cu-Zn superoxide dismutase family. Homodimer. Requires Cu cation as cofactor. The cofactor is Zn(2+).

It localises to the cytoplasm. The enzyme catalyses 2 superoxide + 2 H(+) = H2O2 + O2. Its function is as follows. Destroys radicals which are normally produced within the cells and which are toxic to biological systems. This Zantedeschia aethiopica (White calla lily) protein is Superoxide dismutase [Cu-Zn] (SODCC).